The following is a 179-amino-acid chain: Transcription factor E (179 aa).

Residues 1–102 form the HTH TFE/IIEalpha-type domain; that stretch reads MAKKKVKYTF…YWRFDSRKAA (102 aa).

Belongs to the TFE family. In terms of assembly, monomer. Interaction with RNA polymerase subunits RpoF and RpoE is necessary for Tfe stimulatory transcription activity. Able to interact with Tbp and RNA polymerase in the absence of DNA promoter. Interacts both with the preinitiation and elongation complexes.

Functionally, transcription factor that plays a role in the activation of archaeal genes transcribed by RNA polymerase. Facilitates transcription initiation by enhancing TATA-box recognition by TATA-box-binding protein (Tbp), and transcription factor B (Tfb) and RNA polymerase recruitment. Not absolutely required for transcription in vitro, but particularly important in cases where Tbp or Tfb function is not optimal. It dynamically alters the nucleic acid-binding properties of RNA polymerases by stabilizing the initiation complex and destabilizing elongation complexes. Seems to translocate with the RNA polymerase following initiation and acts by binding to the non template strand of the transcription bubble in elongation complexes. This chain is Transcription factor E, found in Methanosphaera stadtmanae (strain ATCC 43021 / DSM 3091 / JCM 11832 / MCB-3).